The sequence spans 234 residues: Leucyl/phenylalanyl-tRNA--protein transferase (234 aa).

The protein belongs to the L/F-transferase family.

The protein localises to the cytoplasm. It catalyses the reaction N-terminal L-lysyl-[protein] + L-leucyl-tRNA(Leu) = N-terminal L-leucyl-L-lysyl-[protein] + tRNA(Leu) + H(+). It carries out the reaction N-terminal L-arginyl-[protein] + L-leucyl-tRNA(Leu) = N-terminal L-leucyl-L-arginyl-[protein] + tRNA(Leu) + H(+). The enzyme catalyses L-phenylalanyl-tRNA(Phe) + an N-terminal L-alpha-aminoacyl-[protein] = an N-terminal L-phenylalanyl-L-alpha-aminoacyl-[protein] + tRNA(Phe). In terms of biological role, functions in the N-end rule pathway of protein degradation where it conjugates Leu, Phe and, less efficiently, Met from aminoacyl-tRNAs to the N-termini of proteins containing an N-terminal arginine or lysine. This Nitratidesulfovibrio vulgaris (strain ATCC 29579 / DSM 644 / CCUG 34227 / NCIMB 8303 / VKM B-1760 / Hildenborough) (Desulfovibrio vulgaris) protein is Leucyl/phenylalanyl-tRNA--protein transferase.